We begin with the raw amino-acid sequence, 260 residues long: Cytochrome c oxidase subunit 3 (260 aa).

The next 6 helical transmembrane spans lie at Leu41–Ile61, Gly81–Phe101, Thr133–Gly153, Ala161–Ile181, Phe196–Val216, and Ala238–Trp258.

Belongs to the cytochrome c oxidase subunit 3 family. As to quaternary structure, component of the cytochrome c oxidase (complex IV, CIV), a multisubunit enzyme composed of a catalytic core of 3 subunits and several supernumerary subunits. The complex exists as a monomer or a dimer and forms supercomplexes (SCs) in the inner mitochondrial membrane with ubiquinol-cytochrome c oxidoreductase (cytochrome b-c1 complex, complex III, CIII).

The protein resides in the mitochondrion inner membrane. The enzyme catalyses 4 Fe(II)-[cytochrome c] + O2 + 8 H(+)(in) = 4 Fe(III)-[cytochrome c] + 2 H2O + 4 H(+)(out). Functionally, component of the cytochrome c oxidase, the last enzyme in the mitochondrial electron transport chain which drives oxidative phosphorylation. The respiratory chain contains 3 multisubunit complexes succinate dehydrogenase (complex II, CII), ubiquinol-cytochrome c oxidoreductase (cytochrome b-c1 complex, complex III, CIII) and cytochrome c oxidase (complex IV, CIV), that cooperate to transfer electrons derived from NADH and succinate to molecular oxygen, creating an electrochemical gradient over the inner membrane that drives transmembrane transport and the ATP synthase. Cytochrome c oxidase is the component of the respiratory chain that catalyzes the reduction of oxygen to water. Electrons originating from reduced cytochrome c in the intermembrane space (IMS) are transferred via the dinuclear copper A center (CU(A)) of subunit 2 and heme A of subunit 1 to the active site in subunit 1, a binuclear center (BNC) formed by heme A3 and copper B (CU(B)). The BNC reduces molecular oxygen to 2 water molecules using 4 electrons from cytochrome c in the IMS and 4 protons from the mitochondrial matrix. The sequence is that of Cytochrome c oxidase subunit 3 (COIII) from Strongylocentrotus purpuratus (Purple sea urchin).